A 24-amino-acid polypeptide reads, in one-letter code: Large ribosomal subunit protein uL10 (24 aa).

This sequence belongs to the universal ribosomal protein uL10 family. As to quaternary structure, part of the ribosomal stalk of the 50S ribosomal subunit. The N-terminus interacts with L11 and the large rRNA to form the base of the stalk. The C-terminus forms an elongated spine to which L12 dimers bind in a sequential fashion forming a multimeric L10(L12)X complex.

Functionally, forms part of the ribosomal stalk, playing a central role in the interaction of the ribosome with GTP-bound translation factors. The chain is Large ribosomal subunit protein uL10 (rplJ) from Enterobacter cloacae.